The primary structure comprises 456 residues: MFS-type transporter ppzB (456 aa).

Transmembrane regions (helical) follow at residues 1-21, 38-58, 72-92, 125-145, and 154-174; these read MGLFTDLVLYGIVLPALPFIM, GFLATYAGASVFFSVPAGWAA, VFLFVATAIFAFSTSLALLVV, IGTIFATISVGELAAPVLGGV, and AVFAVSAVMLAIDLGLRGLVI. A disordered region spans residues 206-225; that stretch reads EAQERTHEGTPLLPQDDDDD. The next 6 helical transmembrane spans lie at 255–275, 284–304, 318–338, 348–368, 398–418, and 427–447; these read LAMLLSFVQALFIGTFDATVP, FSSLQVGLVFIALMLPYFALG, AAATSGYAFLVPCLLLLGLPE, VALFCTILALNGIGLAVVTSP, FGFSSLYFFTGLAVGPLLGGV, and VMGAVYAAISGVTAIVSFLFV.

The protein belongs to the major facilitator superfamily. TCR/Tet family.

It is found in the membrane. MFS-type transporter; part of the gene cluster that mediates the biosynthesis of pyrrolopyrazines, secondary metabolites showing insecticidal activity. Probably involved in the secretion of peramine and other pyrrolopyrazines. The chain is MFS-type transporter ppzB (ppzB) from Metarhizium majus (strain ARSEF 297).